We begin with the raw amino-acid sequence, 417 residues long: Cyanophycinase (417 aa).

An N-terminal signal peptide occupies residues 1 to 23 (MIRSFIRSSALLLALLPVTGYSA). Catalysis depends on charge relay system residues Ser-169, Asp-188, and His-222.

Belongs to the peptidase S51 family.

Its subcellular location is the secreted. The enzyme catalyses [L-4-(L-arginin-2-N-yl)aspartate](n) + H2O = [L-4-(L-arginin-2-N-yl)aspartate](n-1) + L-4-(L-arginin-2-N-yl)aspartate. With respect to regulation, inhibited by serine protease inhibitors. Inhibited by N-Bromo-succinimide. Its function is as follows. Exopeptidase that catalyzes the hydrolytic cleavage of multi-L-arginyl-poly-L-aspartic acid (cyanophycin; a water-insoluble reserve polymer) into aspartate-arginine dipeptides. This is Cyanophycinase (cphE) from Pseudomonas anguilliseptica.